The chain runs to 438 residues: Ribosome biogenesis protein NOP53 (438 aa).

2 disordered regions span residues methionine 1–glycine 23 and histidine 247–glutamate 346. Over residues glycine 12–arginine 21 the composition is skewed to basic residues. Basic and acidic residues-rich tracts occupy residues lysine 265 to glutamate 288, glutamine 297 to asparagine 318, and leucine 325 to glutamate 346.

The protein belongs to the NOP53 family.

Its subcellular location is the nucleus. The protein resides in the nucleolus. It localises to the nucleoplasm. Functionally, may play a role in ribosome biogenesis, being required for integration of the 5S RNP into the ribosomal large subunit. The sequence is that of Ribosome biogenesis protein NOP53 from Caenorhabditis elegans.